Consider the following 457-residue polypeptide: Ribosomal protein uS12 methylthiotransferase RimO (457 aa).

One can recognise an MTTase N-terminal domain in the interval 6–116 (PKVGFVSLGC…VMEAVHAALP (111 aa)). [4Fe-4S] cluster-binding residues include cysteine 15, cysteine 51, cysteine 80, cysteine 147, cysteine 151, and cysteine 154. Residues 133-370 (LTPRHYAYLK…MARQAEISAA (238 aa)) enclose the Radical SAM core domain. Residues 373-441 (EAKIGSVQQC…EHDLFGDALP (69 aa)) enclose the TRAM domain.

Belongs to the methylthiotransferase family. RimO subfamily. The cofactor is [4Fe-4S] cluster.

The protein resides in the cytoplasm. It carries out the reaction L-aspartate(89)-[ribosomal protein uS12]-hydrogen + (sulfur carrier)-SH + AH2 + 2 S-adenosyl-L-methionine = 3-methylsulfanyl-L-aspartate(89)-[ribosomal protein uS12]-hydrogen + (sulfur carrier)-H + 5'-deoxyadenosine + L-methionine + A + S-adenosyl-L-homocysteine + 2 H(+). Its function is as follows. Catalyzes the methylthiolation of an aspartic acid residue of ribosomal protein uS12. This chain is Ribosomal protein uS12 methylthiotransferase RimO, found in Xanthomonas campestris pv. campestris (strain 8004).